We begin with the raw amino-acid sequence, 571 residues long: Protein EARLY STARVATION 1, chloroplastic (571 aa).

Disordered regions lie at residues 142–162 (RHSS…KDAG) and 215–254 (GSYR…TEHD). Over residues 145 to 155 (SCSSQSLPQQQ) the composition is skewed to low complexity.

Belongs to the ESV1 family.

The protein resides in the plastid. It localises to the chloroplast stroma. Functionally, binds preferentially to highly ordered alpha-glucans, such as starch and crystalline maltodextrins. Involved in the organization of the starch granule matrix, thus influencing starch turnover by modulating the accessibility of starch polymers to modifying and degrading enzymes. Required for the control of starch degradation in leaves and starch distribution in nonphotosynthetic parts. Promotes gravitropic responses, negative in shoots but positive in roots, by facilitating starch granules (statoliths) formation in hypocotyls and roots columella. The polypeptide is Protein EARLY STARVATION 1, chloroplastic (Marchantia polymorpha (Common liverwort)).